We begin with the raw amino-acid sequence, 72 residues long: Large ribosomal subunit protein uL29 (72 aa).

Belongs to the universal ribosomal protein uL29 family.

This is Large ribosomal subunit protein uL29 (rpmC) from Chlamydia muridarum (strain MoPn / Nigg).